The primary structure comprises 102 residues: Small ribosomal subunit protein bS18 (102 aa).

This sequence belongs to the bacterial ribosomal protein bS18 family. Part of the 30S ribosomal subunit. Forms a tight heterodimer with protein bS6.

Binds as a heterodimer with protein bS6 to the central domain of the 16S rRNA, where it helps stabilize the platform of the 30S subunit. The polypeptide is Small ribosomal subunit protein bS18 (Orientia tsutsugamushi (strain Ikeda) (Rickettsia tsutsugamushi)).